The sequence spans 102 residues: Small integral membrane protein 29 (102 aa).

N-linked (GlcNAc...) asparagine glycosylation is present at N3. Residues V21 to V41 form a helical membrane-spanning segment.

Expressed in spleen, thymus, prostate, testis, uterus, small intestine, colon and peripheral blood leukocytes.

It is found in the membrane. The sequence is that of Small integral membrane protein 29 from Homo sapiens (Human).